The sequence spans 484 residues: Zinc metalloproteinase-disintegrin stejnitin (484 aa).

An N-terminal signal peptide occupies residues Met1–Ser20. Positions Ile21 to Glu192 are excised as a propeptide. Gln193 is subject to Pyrrolidone carboxylic acid. The Peptidase M12B domain maps to Arg194–Pro392. Position 197 (Glu197) interacts with Ca(2+). The N-linked (GlcNAc...) asparagine glycan is linked to Asn254. Position 281 (Asp281) interacts with Ca(2+). 3 disulfide bridges follow: Cys305/Cys387, Cys345/Cys369, and Cys347/Cys352. 3 residues coordinate Zn(2+): His330, His334, and His340. Residues Cys387, Asn390, Val402, Asn405, Glu409, Glu412, and Asp415 each contribute to the Ca(2+) site. Positions Pro400 to Ala484 constitute a Disintegrin domain. 7 disulfide bridges follow: Cys403/Cys422, Cys414/Cys432, Cys416/Cys427, Cys426/Cys449, Cys440/Cys446, Cys445/Cys470, and Cys458/Cys477. Residues Lys462–Asp464 carry the Cell attachment site motif.

The protein belongs to the venom metalloproteinase (M12B) family. P-II subfamily. P-IIb sub-subfamily. The cofactor is Zn(2+). Post-translationally, the N-terminus is blocked. As to expression, expressed by the venom gland.

The protein localises to the secreted. Its function is as follows. Snake venom zinc metalloproteinase that inhibits ADP-induced platelet aggregation in human platelet-rich plasma (IC(50) is 175 nM) and cleaves alpha-(FGA) and subsequently the beta-chain (FGG) of bovine fibrinogen, leaving the gamma-chain unaffected. It is also able to inhibit proliferatin of ECV304 cells by inducing apoptosis of these cells. This chain is Zinc metalloproteinase-disintegrin stejnitin, found in Trimeresurus stejnegeri (Chinese green tree viper).